We begin with the raw amino-acid sequence, 308 residues long: S-adenosylmethionine-dependent nucleotide dehydratase (308 aa).

Positions 7 to 253 constitute a Radical SAM core domain; the sequence is SIQELVINFH…WQSYLMINPE (247 aa). [4Fe-4S] cluster is bound by residues C21, C25, and C28.

The protein belongs to the radical SAM superfamily. Viperin family. It depends on [4Fe-4S] cluster as a cofactor.

The catalysed reaction is CTP + AH2 + S-adenosyl-L-methionine = 3'-deoxy-3',4'-didehydro-CTP + 5'-deoxyadenosine + L-methionine + A + H2O + H(+). It carries out the reaction GTP + AH2 + S-adenosyl-L-methionine = 3'-deoxy-3',4'-didehydro-GTP + 5'-deoxyadenosine + L-methionine + A + H2O + H(+). The enzyme catalyses UTP + AH2 + S-adenosyl-L-methionine = 3'-deoxy-3',4'-didehydro-UTP + 5'-deoxyadenosine + L-methionine + A + H2O + H(+). Its function is as follows. Expression of pVip58 in E.coli (strain MG1655) confers resistance to phages lambda, P1 and T7; delays culture collapse upon infection with T7. Catalyzes the conversion of cytidine triphosphate (CTP) to 3'-deoxy-3',4'-didehydro-CTP (ddhCTP), guanosine triphosphate (GTP) to 3'-deoxy-3',4'-didehydro-GTP (ddhGTP) and uridine triphosphate (UTP) to 3'-deoxy-3',4'-didehydro-UTP (ddhUTP), probably via a SAM-dependent radical mechanism. The modified nucleotide represses transcription from T7 RNA polymerase-directed genes (possibly by acting as chain terminators), strongly suggesting these nucleotides block viral polymerase transcription. This chain is S-adenosylmethionine-dependent nucleotide dehydratase, found in Pseudoalteromonas ulvae.